A 148-amino-acid chain; its full sequence is Small ribosomal subunit protein bS6 (148 aa).

A disordered region spans residues 96–148; sequence HEEGQSAMLTRRDDRRERDGDDRPRRREGGFDRGDRGDRGPRRPRDTEAGEGA.

Belongs to the bacterial ribosomal protein bS6 family.

Its function is as follows. Binds together with bS18 to 16S ribosomal RNA. In Brucella canis (strain ATCC 23365 / NCTC 10854 / RM-666), this protein is Small ribosomal subunit protein bS6.